We begin with the raw amino-acid sequence, 349 residues long: Bifunctional protein FolKE (349 aa).

A 2-amino-4-hydroxy-6-hydroxymethyldihydropteridine pyrophosphokinase region spans residues 1-226 (MQTTYLSMGS…LFEIDSSKTD (226 aa)). Positions 226 to 349 (DSIVLIKDIP…KRMEFLESLL (124 aa)) are GTP cyclohydrolase 1.

This sequence in the N-terminal section; belongs to the HPPK family. It in the C-terminal section; belongs to the GTP cyclohydrolase I family. Homomer.

The catalysed reaction is 6-hydroxymethyl-7,8-dihydropterin + ATP = (7,8-dihydropterin-6-yl)methyl diphosphate + AMP + H(+). It carries out the reaction GTP + H2O = 7,8-dihydroneopterin 3'-triphosphate + formate + H(+). It participates in cofactor biosynthesis; 7,8-dihydroneopterin triphosphate biosynthesis; 7,8-dihydroneopterin triphosphate from GTP: step 1/1. It functions in the pathway cofactor biosynthesis; tetrahydrofolate biosynthesis; 2-amino-4-hydroxy-6-hydroxymethyl-7,8-dihydropteridine diphosphate from 7,8-dihydroneopterin triphosphate: step 4/4. The protein is Bifunctional protein FolKE (folKE) of Lactococcus lactis subsp. lactis (strain IL1403) (Streptococcus lactis).